A 278-amino-acid polypeptide reads, in one-letter code: Nucleotide-binding protein Tmel_1373 (278 aa).

An ATP-binding site is contributed by 10–17 (GLSGAGKS). 58 to 61 (DSRS) contacts GTP.

It belongs to the RapZ-like family.

In terms of biological role, displays ATPase and GTPase activities. The chain is Nucleotide-binding protein Tmel_1373 from Thermosipho melanesiensis (strain DSM 12029 / CIP 104789 / BI429).